We begin with the raw amino-acid sequence, 211 residues long: 3,4-dihydroxy-2-butanone 4-phosphate synthase (211 aa).

D-ribulose 5-phosphate contacts are provided by residues 37 to 38, D42, 150 to 154, and E174; these read RE and RGGHT. E38 serves as a coordination point for Mg(2+). H153 is a binding site for Mg(2+).

It belongs to the DHBP synthase family. Homodimer. Mg(2+) is required as a cofactor. It depends on Mn(2+) as a cofactor.

The enzyme catalyses D-ribulose 5-phosphate = (2S)-2-hydroxy-3-oxobutyl phosphate + formate + H(+). It participates in cofactor biosynthesis; riboflavin biosynthesis; 2-hydroxy-3-oxobutyl phosphate from D-ribulose 5-phosphate: step 1/1. Its function is as follows. Catalyzes the conversion of D-ribulose 5-phosphate to formate and 3,4-dihydroxy-2-butanone 4-phosphate. This Baumannia cicadellinicola subsp. Homalodisca coagulata protein is 3,4-dihydroxy-2-butanone 4-phosphate synthase.